The sequence spans 168 residues: Plasma membrane-associated cation-binding protein 2 (168 aa).

Residue Gly2 is the site of N-myristoyl glycine attachment. Repeat copies occupy residues 26–30 (VEEEK), 69–73 (VEEKK), 94–99 (VEEEKK), 103–107 (VEEKK), 110–115 (VEEEKK), 118–122 (VEEKK), and 124–129 (VEEEKK). The 7 X 5 AA approximate repeats of V-E-E-K-K stretch occupies residues 26–129 (VEEEKPREVE…EKKPVEEEKK (104 aa)). The stretch at 56–77 (EEIIATGEKEIEIVEEKKEEAK) forms a coiled coil. Residues 88–131 (EEKKPAVEEEKKTAPVEEKKPAVEEEKKPAVEEKKPVEEEKKEV) show a composition bias toward basic and acidic residues. Positions 88–168 (EEKKPAVEEE…ETPAAAPQKA (81 aa)) are disordered. The span at 152-168 (ETPAKAPETPAAAPQKA) shows a compositional bias: low complexity.

It belongs to the DREPP family. As to quaternary structure, binds microtubules. Interacts with calcium ion Ca(2+), calmodulin and some phosphatidylinositol phosphates (PtdInsPs) such as phosphatidylinositol 3,5-bisphosphate [PtdIns(3,5)P(2)], PtdIns(4,5)P(2) and PtdIns(3,4,5)P(3). It depends on Cu(2+) as a cofactor. As to expression, mostly expressed in the expanding cells, specifically in roots (except in root tips) and flowers (at protein level). Also detected in cotyledons, hypocotyls and trichome stalks.

The protein resides in the cell membrane. It localises to the cytoplasm. Its subcellular location is the cytoskeleton. In terms of biological role, may be involved in intracellular signaling through interaction with PtdInsPs and calmodulin (CaM); may keep PtdInsPs attached to the plasma membrane until Ca(2+)-CaM reaches a competitive concentration subsequent to an increase triggered by a stimulus, thus leading to PtdInsPs release and subsequent activation of InsPs-dependent signaling cascade. Binds to microtubules and inhibits tubulin polymerization. Regulates directional cell growth and cortical microtubule organization by destabilizing microtubules (e.g. in cotyledon pavement cells). The polypeptide is Plasma membrane-associated cation-binding protein 2 (Arabidopsis thaliana (Mouse-ear cress)).